A 346-amino-acid chain; its full sequence is DNA polymerase IV 2 (346 aa).

One can recognise a UmuC domain in the interval 9-191 (ILHVDLDQFL…RTVEALWGVG (183 aa)). Positions 13 and 111 each coordinate Mg(2+). Residue glutamate 112 is part of the active site.

It belongs to the DNA polymerase type-Y family. As to quaternary structure, monomer. The cofactor is Mg(2+).

The protein localises to the cytoplasm. It carries out the reaction DNA(n) + a 2'-deoxyribonucleoside 5'-triphosphate = DNA(n+1) + diphosphate. Poorly processive, error-prone DNA polymerase involved in untargeted mutagenesis. Copies undamaged DNA at stalled replication forks, which arise in vivo from mismatched or misaligned primer ends. These misaligned primers can be extended by PolIV. Exhibits no 3'-5' exonuclease (proofreading) activity. May be involved in translesional synthesis, in conjunction with the beta clamp from PolIII. This Mycobacterium bovis (strain ATCC BAA-935 / AF2122/97) protein is DNA polymerase IV 2 (dinB2).